Here is a 384-residue protein sequence, read N- to C-terminus: Alcohol dehydrogenase class-3 (384 aa).

Residues Cys48, His70, Cys100, Cys103, Cys106, Cys114, and Cys177 each contribute to the Zn(2+) site.

Belongs to the zinc-containing alcohol dehydrogenase family. Class-III subfamily. In terms of assembly, homodimer. Zn(2+) serves as cofactor.

Its subcellular location is the cytoplasm. The enzyme catalyses a primary alcohol + NAD(+) = an aldehyde + NADH + H(+). The catalysed reaction is a secondary alcohol + NAD(+) = a ketone + NADH + H(+). It carries out the reaction S-(hydroxymethyl)glutathione + NADP(+) = S-formylglutathione + NADPH + H(+). It catalyses the reaction S-(hydroxymethyl)glutathione + NAD(+) = S-formylglutathione + NADH + H(+). Class-III ADH is remarkably ineffective in oxidizing ethanol, but it readily catalyzes the oxidation of long-chain primary alcohols and the oxidation of S-(hydroxymethyl) glutathione. Plays a role in the calcium flux to the cytoplasm in the ASJ sensory neurons upon removal of a nitric oxide stimulus. The polypeptide is Alcohol dehydrogenase class-3 (Caenorhabditis elegans).